A 298-amino-acid chain; its full sequence is Oxygen-dependent coproporphyrinogen-III oxidase (298 aa).

S90 is a binding site for substrate. A divalent metal cation is bound by residues H94 and H104. The Proton donor role is filled by H104. Position 106-108 (106-108) interacts with substrate; that stretch reads NVR. A divalent metal cation contacts are provided by H143 and H173. The tract at residues 238–273 is important for dimerization; the sequence is YVEFNLVWDRGTLFGLQSGGRTESILMSLPPIVKWR. Residue 256–258 coordinates substrate; the sequence is GGR.

Belongs to the aerobic coproporphyrinogen-III oxidase family. In terms of assembly, homodimer. A divalent metal cation is required as a cofactor.

The protein localises to the cytoplasm. It catalyses the reaction coproporphyrinogen III + O2 + 2 H(+) = protoporphyrinogen IX + 2 CO2 + 2 H2O. The protein operates within porphyrin-containing compound metabolism; protoporphyrin-IX biosynthesis; protoporphyrinogen-IX from coproporphyrinogen-III (O2 route): step 1/1. In terms of biological role, involved in the heme biosynthesis. Catalyzes the aerobic oxidative decarboxylation of propionate groups of rings A and B of coproporphyrinogen-III to yield the vinyl groups in protoporphyrinogen-IX. The protein is Oxygen-dependent coproporphyrinogen-III oxidase of Dechloromonas aromatica (strain RCB).